A 543-amino-acid polypeptide reads, in one-letter code: Gap junction alpha-10 protein (543 aa).

The Cytoplasmic portion of the chain corresponds to Met-1 to Ser-16. The helical transmembrane segment at His-17–Leu-37 threads the bilayer. At Arg-38–Arg-76 the chain is on the extracellular side. A helical transmembrane segment spans residues Phe-77–Leu-97. Residues Tyr-98–Ser-165 lie on the Cytoplasmic side of the membrane. Residues Val-166–Leu-186 traverse the membrane as a helical segment. The Extracellular portion of the chain corresponds to Tyr-187 to Thr-209. A helical membrane pass occupies residues Ile-210 to Ile-230. Topologically, residues Phe-231–Ser-543 are cytoplasmic. 2 disordered regions span residues Pro-306 to Gly-359 and Pro-379 to Arg-424. The segment covering Asn-317–His-328 has biased composition (basic and acidic residues). Residues Ala-344–Gly-359 show a composition bias toward polar residues. The segment covering Thr-400–Met-413 has biased composition (basic and acidic residues).

It belongs to the connexin family. Alpha-type (group II) subfamily. As to quaternary structure, a connexon is composed of a hexamer of connexins. In terms of tissue distribution, expressed in skeletal muscle and heart.

Its subcellular location is the cell membrane. The protein localises to the cell junction. It is found in the gap junction. Functionally, one gap junction consists of a cluster of closely packed pairs of transmembrane channels, the connexons, through which materials of low MW diffuse from one cell to a neighboring cell. Involved in tracer coupling between horizontal cells of the retina. May play a role in the regulation of horizontal cell patterning. The polypeptide is Gap junction alpha-10 protein (GJA10) (Homo sapiens (Human)).